A 483-amino-acid polypeptide reads, in one-letter code: Glutamyl-tRNA(Gln) amidotransferase subunit A (483 aa).

Catalysis depends on charge relay system residues Lys-76 and Ser-151. Ser-175 acts as the Acyl-ester intermediate in catalysis.

This sequence belongs to the amidase family. GatA subfamily. In terms of assembly, heterotrimer of A, B and C subunits.

The enzyme catalyses L-glutamyl-tRNA(Gln) + L-glutamine + ATP + H2O = L-glutaminyl-tRNA(Gln) + L-glutamate + ADP + phosphate + H(+). In terms of biological role, allows the formation of correctly charged Gln-tRNA(Gln) through the transamidation of misacylated Glu-tRNA(Gln) in organisms which lack glutaminyl-tRNA synthetase. The reaction takes place in the presence of glutamine and ATP through an activated gamma-phospho-Glu-tRNA(Gln). The chain is Glutamyl-tRNA(Gln) amidotransferase subunit A from Azotobacter vinelandii (strain DJ / ATCC BAA-1303).